A 47-amino-acid chain; its full sequence is uncharacterized protein (47 aa).

An ATP-cone domain is found at Leu-2 to Gly-47.

This is an uncharacterized protein from Archaeoglobus fulgidus (strain ATCC 49558 / DSM 4304 / JCM 9628 / NBRC 100126 / VC-16).